Here is a 213-residue protein sequence, read N- to C-terminus: Calcineurin B-like protein 8 (213 aa).

G2 carries N-myristoyl glycine lipidation. 4 EF-hand domains span residues 31-66 (EVEA…RNSN), 67-102 (KKNL…FHPE), 104-139 (PLGD…LLNE), and 148-183 (AVEQ…NPAL). Ca(2+)-binding residues include D161, N163, D165, K167, and E172.

It belongs to the calcineurin regulatory subunit family. In terms of assembly, homodimer. In terms of tissue distribution, expressed at low levels in roots, shoots, culms, leaves and young spikelets.

It localises to the cell membrane. Functionally, acts as a calcium sensor. May function as positive regulator of salt stress responses. CBL proteins interact with CIPK serine-threonine protein kinases. Binding of a CBL protein to the regulatory NAF domain of a CIPK protein lead to the activation of the kinase in a calcium-dependent manner. In Oryza sativa subsp. japonica (Rice), this protein is Calcineurin B-like protein 8 (CBL8).